A 317-amino-acid polypeptide reads, in one-letter code: Ribosomal RNA small subunit methyltransferase H (317 aa).

S-adenosyl-L-methionine is bound by residues 34 to 36 (GGH), Asp53, Phe80, Asp98, and Gln105.

It belongs to the methyltransferase superfamily. RsmH family.

The protein resides in the cytoplasm. It carries out the reaction cytidine(1402) in 16S rRNA + S-adenosyl-L-methionine = N(4)-methylcytidine(1402) in 16S rRNA + S-adenosyl-L-homocysteine + H(+). In terms of biological role, specifically methylates the N4 position of cytidine in position 1402 (C1402) of 16S rRNA. This is Ribosomal RNA small subunit methyltransferase H from Tropheryma whipplei (strain TW08/27) (Whipple's bacillus).